Consider the following 304-residue polypeptide: Peptidyl-prolyl cis-trans isomerase FKBP35 (304 aa).

Residues 37–126 (GNEVTVHYVG…LFEIELLSFR (90 aa)) enclose the PPIase FKBP-type domain. 3 TPR repeats span residues 144–177 (AFDI…FIHT), 194–227 (ISCN…DKNN), and 228–261 (VKAL…NPNN).

Belongs to the FKBP-type PPIase family. In terms of assembly, homodimer. Interacts (via TPR repeats) with HSP90 (probably via MEEVD motif).

The protein localises to the cytoplasm. It localises to the nucleus. It catalyses the reaction [protein]-peptidylproline (omega=180) = [protein]-peptidylproline (omega=0). Inhibited by FK506 and its derivates, such as ascomycin, and rapamycin. FK506 and rapamycin inhibit peptidylprolyl isomerase activity but not chaperone activity. Inhibited by N-(2-ethyl-phenyl)-2-(3H-imidazao [4, 5-b] pyridin-2-yl-sulfanyl)-acetamide (D44). Not inhibited by cyclosporin A. Inhibition of calcineurin phosphatase activity is enhanced by FK506. Its function is as follows. Has peptidylprolyl isomerase (PPIase) and co-chaperone activities. Assists protein folding by catalyzing the peptidyl conversion of cis and trans rotamers of the prolyl amide bond of protein substrates. Inhibits calcineurin phosphatase activity in vitro. Plays an essential role in merozoite egress from host erythrocytes. The sequence is that of Peptidyl-prolyl cis-trans isomerase FKBP35 from Plasmodium falciparum (isolate 3D7).